A 778-amino-acid polypeptide reads, in one-letter code: Protein SPT2 homolog (778 aa).

Disordered regions lie at residues 1–21, 50–625, and 639–685; these read MDFH…GIAK, KKDE…AKPK, and VPKS…DDDD. An important for interaction with DNA region spans residues 1 to 665; it reads MDFHSVLKMA…PGHRPAMRPP (665 aa). Residues 44 to 83 are a coiled coil; it reads VQAFLRKKDEESRRKETVEKRKKEDLLAKRKELKHDRKAR. Positions 50–78 are enriched in basic and acidic residues; sequence KKDEESRRKETVEKRKKEDLLAKRKELKH. The span at 114–135 shows a compositional bias: acidic residues; that stretch reads EEDQNDNMAAEGEEYMTEEELY. Positions 153–167 are enriched in pro residues; it reads QKVPKPAPGKKPPTP. Residues 190 to 227 show a composition bias toward basic and acidic residues; it reads RPVKKEERLRTAEELKELEFLERKAQKADRKDPKRNEQ. Positions 193–221 form a coiled coil; that stretch reads KKEERLRTAEELKELEFLERKAQKADRKD. The span at 242-269 shows a compositional bias: polar residues; that stretch reads LKGTHSGNSKSSSTEQNGTIRKSSSDTG. Over residues 270–286 the composition is skewed to basic and acidic residues; sequence SRTEKSGSVFHTKESKK. Low complexity predominate over residues 312-335; it reads SSQPSAASNSAFGRPSGSARPSGS. Composition is skewed to gly residues over residues 336-357 and 365-384; these read SGPG…GGSA and GGSG…GKPI. The span at 385–394 shows a compositional bias: low complexity; sequence GGLHSSHGSG. Positions 395–417 are enriched in gly residues; the sequence is KPTGGTGSGSGKPTGASGSGSGK. 2 stretches are compositionally biased toward low complexity: residues 418–493 and 506–559; these read PTGS…SGSA and GSGS…PSSS. Residues 588–604 are compositionally biased toward polar residues; it reads VRPNSTSVPGSARSSLG. The span at 662–671 shows a compositional bias: pro residues; it reads MRPPGPPLPP. Positions 666-778 are important for interaction with histones; it reads GPPLPPITSS…QLKAAKKMSR (113 aa). Residues 735–778 adopt a coiled-coil conformation; the sequence is REQQKEEARSLRLGIQEDLEELQREEEELKRKAKQLKAAKKMSR.

Belongs to the SPT2 family. In terms of assembly, interacts with histones. Interacts with a heterotetrameric complex formed by histone H3 and H4, especially when the histone tetramer is not bound to DNA.

The protein localises to the nucleus. The protein resides in the nucleolus. Its function is as follows. Histone chaperone that stabilizes pre-existing histone tetramers and regulates replication-independent histone exchange on chromatin. Required for normal chromatin refolding in the coding region of transcribed genes, and for the suppression of spurious transcription. Binds DNA and histones and promotes nucleosome assembly (in vitro). Facilitates formation of tetrameric histone complexes containing histone H3 and H4. Modulates RNA polymerase 1-mediated transcription. Binds DNA, with a preference for branched DNA species, such as Y-form DNA and Holliday junction DNA. The sequence is that of Protein SPT2 homolog (spty2d1) from Xenopus tropicalis (Western clawed frog).